Consider the following 807-residue polypeptide: Enhancer of polycomb homolog 2 (807 aa).

Glycyl lysine isopeptide (Lys-Gly) (interchain with G-Cter in SUMO2) cross-links involve residues Lys-135, Lys-195, Lys-324, and Lys-362. Positions 376–396 (DEFPQVLSPVSEPEEENDPDG) are disordered. At Ser-538 the chain carries Phosphoserine. Over residues 600-613 (QLQQKQQSQHSSQQ) the composition is skewed to low complexity. Disordered stretches follow at residues 600 to 628 (QLQQKQQSQHSSQQTHPKAQGSSTSDCMS) and 645 to 673 (SAPVPSRSEVAKEQNTGHNNINGVVQPSG). 2 stretches are compositionally biased toward polar residues: residues 614–628 (THPKAQGSSTSDCMS) and 657–673 (EQNTGHNNINGVVQPSG). Residue Ser-754 is modified to Phosphoserine.

The protein belongs to the enhancer of polycomb family.

The protein resides in the nucleus. May play a role in transcription or DNA repair. This is Enhancer of polycomb homolog 2 (EPC2) from Homo sapiens (Human).